The primary structure comprises 445 residues: StAR-related lipid transfer protein 3 (445 aa).

Residues 1 to 51 (MSKLPGELARDLECSLPAVASLGSSLSHSQSLSSHLLPPPEKRRAISDVRR) are Cytoplasmic-facing. The MENTAL domain occupies 46–217 (ISDVRRTFCL…YSPPESFAGS (172 aa)). The chain crosses the membrane as a helical span at residues 52 to 72 (TFCLFVTFDLLFISLLWIIEL). Topologically, residues 73 to 94 (NTNTGIRKNLEQEIIQYNFKTS) are extracellular. The chain crosses the membrane as a helical span at residues 95-115 (FFDIFVLAFFRFSGLLLGYAV). At 116–120 (LRLQH) the chain is on the cytoplasmic side. Residues 121–141 (WWVIAVTTLVSSAFLIVKVIL) traverse the membrane as a helical segment. Residues 142-148 (SELLSKG) lie on the Extracellular side of the membrane. Residues 149–169 (AFGYLLPIVSFVLAWLETWFL) form a helical membrane-spanning segment. The Cytoplasmic portion of the chain corresponds to 170 to 445 (DFKVLPQEAE…QRISELGARA (276 aa)). 2 short sequence motifs (FFAT) span residues 206-212 (QFYSPPE) and 207-212 (FYSPPE). A phosphoserine mark is found at Ser-209, Ser-217, and Ser-221. Residues 248-443 (VVDQILAQEE…LRQRISELGA (196 aa)) form the START domain.

The protein belongs to the STARD3 family. Homodimer. Interacts (via the MENTAL domain) with STARD3NL. Interacts (via phosphorylated FFAT motif) with VAPA (via MSP domain). Interacts (via phosphorylated FFAT motif) with VAPB (via MSP domain). Interacts (via phosphorylated FFAT motif) with MOSPD2 (via MSP domain); this interaction allows enrichment of MOSPD2 around endosomes. In terms of processing, phosphorylation at Ser-209 is necessary and sufficient for the direct interaction of the phosphorylated FFAT motif with the MSP domain of MOSPD2, VAPA and VAPB and allows the tethering of two membranes that participates in the formation of ER-endosome contacts. Phosphorylation of the FFAT motif leads to conformation changes. Additional phosphorylations around the core FFAT motif (QFYSPPE) are not essential but strengthen the interaction with MOSPD2, VAPA and VAPB. Phosphorylation at Ser-209 of FFAT motif drives membrane tethering between the endoplasmic reticulum and late endosomes via interaction with VAPA and VAPB that in turn allows the efficient transport of sterol mediated by the START domain. Present in retina. Localizes to all neurons of macular retina and especially cone inner segments and axons (at protein level).

It is found in the late endosome membrane. It catalyses the reaction cholesterol(in) = cholesterol(out). Functionally, sterol-binding protein that mediates cholesterol transport from the endoplasmic reticulum to endosomes. The sterol transport mechanism is triggered by phosphorylation of FFAT motif that leads to membrane tethering between the endoplasmic reticulum and late endosomes via interaction with VAPA and VAPB. Acts as a lipid transfer protein that redirects sterol to the endosome at the expense of the cell membrane and favors membrane formation inside endosomes. May also mediate cholesterol transport between other membranes, such as mitochondria membrane or cell membrane. However, such results need additional experimental evidences; probably mainly mediates cholesterol transport from the endoplasmic reticulum to endosomes. Does not activate transcriptional cholesterol sensing. Able to bind other lipids, such as lutein, a xanthophyll carotenoids that form the macular pigment of the retina. Able to bind other lipids, such as lutein, a xanthophyll carotenoids that form the macular pigment of the retina. This Macaca mulatta (Rhesus macaque) protein is StAR-related lipid transfer protein 3.